We begin with the raw amino-acid sequence, 712 residues long: Elongation factor G (712 aa).

The region spanning 8 to 290 is the tr-type G domain; the sequence is TRYRNIGISA…AVIEFLPSPT (283 aa). Residues 17–24, 88–92, and 142–145 each bind GTP; these read AHIDAGKT, DTPGH, and NKMD.

This sequence belongs to the TRAFAC class translation factor GTPase superfamily. Classic translation factor GTPase family. EF-G/EF-2 subfamily.

The protein resides in the cytoplasm. Functionally, catalyzes the GTP-dependent ribosomal translocation step during translation elongation. During this step, the ribosome changes from the pre-translocational (PRE) to the post-translocational (POST) state as the newly formed A-site-bound peptidyl-tRNA and P-site-bound deacylated tRNA move to the P and E sites, respectively. Catalyzes the coordinated movement of the two tRNA molecules, the mRNA and conformational changes in the ribosome. In Acinetobacter baumannii (strain SDF), this protein is Elongation factor G.